The chain runs to 389 residues: MMISEIRQELTDHIIPFWNKLRDDENGGFYGYLSYGLGLDKKADKGVILHSRILWFYSNAYMTLGGDELLDNAKHAYEFIKNNCIDYEYGGVYWMMDFEGKPADTMKHTYNIAFAIYALSSYYRASGDKEALALAYRPFEDIEKNTLYEYGYREAFDRQWRLVDNEALSENGLKADKTMNAILHLIEAYTELYKADGNEKVADRLKFQLGQMRDIVYTPDTNALKVFFDTAFNLVGDIHSYGHDIEATWLMDRACDVLGDEDLKKQFAEMDLKISHNIQDIALEDGALNNERDKNEIDKTRVWWVQAEAVVGFINAYQHSGDEKFLESAKSVWENIKEYIIDKREGGEWYSEVTFDHTPHDYKETVGPWKCPYHNGRMCMEVITRGVDI.

This sequence belongs to the cellobiose 2-epimerase family.

Its subcellular location is the cytoplasm. It catalyses the reaction D-cellobiose = beta-D-glucosyl-(1-&gt;4)-D-mannopyranose. Its activity is regulated as follows. Enhanced by Mg(2+) and Ca(2+) ions, ethylenediaminetetraacetic acid, ethylene glycol tetraacetic acid and citrate. Inhibited by Al(3+), Fe(3+), Co(2+), Cu(2+), Zn(2+), Pb(2+) and Ag(+) ions, iodoacetate, 4-chloromercuribenzoate and N-bromosuccinimide. Catalyzes the reversible epimerization of cellobiose to 4-O-beta-D-glucopyranosyl-D-mannose (Glc-Man). Can also epimerize cellotriose to Glc-Glc-Man, cellotetraose to Glc-Glc-Glc-Man, and lactose to epilactose. The chain is Cellobiose 2-epimerase (ce-ne1) from Ruminococcus albus.